The primary structure comprises 321 residues: D-alanine--D-alanine ligase (321 aa).

One can recognise an ATP-grasp domain in the interval 121-315 (RIWFLTNNIN…FTNLIEEIIK (195 aa)). 147 to 199 (PMKRPYVIKPLTQGSSIGVEVIFAEDDFNFADYDFPYGDQVIIEQYIKGRELQ) contacts ATP. Mg(2+)-binding residues include Glu-268, Glu-282, and Asn-284.

This sequence belongs to the D-alanine--D-alanine ligase family. Requires Mg(2+) as cofactor. Mn(2+) serves as cofactor.

The protein resides in the cytoplasm. It catalyses the reaction 2 D-alanine + ATP = D-alanyl-D-alanine + ADP + phosphate + H(+). It functions in the pathway cell wall biogenesis; peptidoglycan biosynthesis. Cell wall formation. This Rickettsia rickettsii (strain Iowa) protein is D-alanine--D-alanine ligase.